Here is a 101-residue protein sequence, read N- to C-terminus: MSGSINKDPRDVIIAPVVSEKSYGLIDEGKYTFLVDPRSNKSEIKQAVERIFNVDVASVNTLNRSGKRRRTRFGWGQRKSTKRAIVTLKDGTIDIFGGPLA.

This sequence belongs to the universal ribosomal protein uL23 family. In terms of assembly, part of the 50S ribosomal subunit. Contacts protein L29, and trigger factor when it is bound to the ribosome.

In terms of biological role, one of the early assembly proteins it binds 23S rRNA. One of the proteins that surrounds the polypeptide exit tunnel on the outside of the ribosome. Forms the main docking site for trigger factor binding to the ribosome. In Micrococcus luteus (strain ATCC 4698 / DSM 20030 / JCM 1464 / CCM 169 / CCUG 5858 / IAM 1056 / NBRC 3333 / NCIMB 9278 / NCTC 2665 / VKM Ac-2230) (Micrococcus lysodeikticus), this protein is Large ribosomal subunit protein uL23.